Consider the following 485-residue polypeptide: Glycogen synthase (485 aa).

Position 21 (K21) interacts with ADP-alpha-D-glucose.

Belongs to the glycosyltransferase 1 family. Bacterial/plant glycogen synthase subfamily.

It catalyses the reaction [(1-&gt;4)-alpha-D-glucosyl](n) + ADP-alpha-D-glucose = [(1-&gt;4)-alpha-D-glucosyl](n+1) + ADP + H(+). It participates in glycan biosynthesis; glycogen biosynthesis. In terms of biological role, synthesizes alpha-1,4-glucan chains using ADP-glucose. The polypeptide is Glycogen synthase (Pseudomonas syringae pv. syringae (strain B728a)).